We begin with the raw amino-acid sequence, 591 residues long: Aspartate--tRNA ligase (591 aa).

An L-aspartate-binding site is contributed by E176. The segment at 200–203 is aspartate; that stretch reads QILK. R222 is an L-aspartate binding site. ATP contacts are provided by residues 222–224 and Q231; that span reads RDE. H450 serves as a coordination point for L-aspartate. Residue E484 participates in ATP binding. L-aspartate is bound at residue R491. 536–539 is an ATP binding site; sequence GLDR.

Belongs to the class-II aminoacyl-tRNA synthetase family. Type 1 subfamily. As to quaternary structure, homodimer.

It is found in the cytoplasm. The enzyme catalyses tRNA(Asp) + L-aspartate + ATP = L-aspartyl-tRNA(Asp) + AMP + diphosphate. Its function is as follows. Catalyzes the attachment of L-aspartate to tRNA(Asp) in a two-step reaction: L-aspartate is first activated by ATP to form Asp-AMP and then transferred to the acceptor end of tRNA(Asp). The protein is Aspartate--tRNA ligase of Listeria monocytogenes serovar 1/2a (strain ATCC BAA-679 / EGD-e).